The sequence spans 952 residues: MFKFFSSFGDSNEKEIRALEPLVDKINQLENSFTTLSDEALKAKTIEFRARLKDTFETTTAGIQEDITSTTAELAEAQKIADNSKQSRLKAKLESLNKDLSAKETTALNGILPEAFAAVREASRRTIGLRHYDVQLIGGMVLHHGKIAEMRTGEGKTLVATLPLYLNSLLGKGVHLVTVNDYLARRDAYWMGPVYHALGVSVSSIYPMQTPTEELPSRLFDPDYTSEIPGDPWTHFRPISRQEAYKADITYGTSTEFGFDYLRDNLRPDLAQCVQRDMNYAIVDEIDNLLIDEARTPLIISAPDTEAGKLYDVFARLSPRLVAVKDYEINEKDRNAELTEDGWANVEKLLSREGVMKGNSLYDPQNAPLIRHLRNALSAKEFYKKDHQYVVKEGEIIIIDEFTGRMMLGRRYSEGLHQAIEAKEHVKVQQESKTYATVTIQNLFRMYRKLCGMTGTAATEAEEFSKIYKLEVVIIPTNKPAVREDYGDQIYKDQSAKFKAVVNEIDEMRKLGRPVLVGTVSIENSEMLSNMLKRQGIEHKVLNAKQHEKEAQVVAEAGKPGAVTVATNMAGRGVDILLGGKEPTKDDAKVYNEWQAHHQQVLEAGGLHVIGTERHESRRIDNQLRGRSGRQGDPGSSRFYVALDDDIMRRFGSERIQGIMEWAGMDENTPIENGLVSRTLENAQKRVEGYHFDVRKHLVEYDDVVNKHREVIYAERRKILSGADLKSNILDMIREEIITQTAEHTRGYDSSEWNLDGLVTHLNGIFTLPAEINAEALAKLSQEEITDLLTRTAEELYQKKEDETGAGSMRLLERIIMLHTLDSLWVEHLTIMENLRREIGLQAFAQRDPLIAYKNEGHVRFQELLETIKHDVVHNIYRIGIQIQHQTESATAKAASSPVQQQKPLPAAPAAAIPGVSAKAATQSTTPAAKEIGRNDPCPCGSGKKYKKCCGK.

ATP contacts are provided by residues Q135, 153-157 (GEGKT), and D575. A compositionally biased stretch (basic and acidic residues) spans 614-624 (RHESRRIDNQL). Disordered regions lie at residues 614-636 (RHESRRIDNQLRGRSGRQGDPGS) and 916-946 (VSAKAATQSTTPAAKEIGRNDPCPCGSGKKY). Residues C938, C940, C949, and C950 each contribute to the Zn(2+) site.

Belongs to the SecA family. As to quaternary structure, monomer and homodimer. Part of the essential Sec protein translocation apparatus which comprises SecA, SecYEG and auxiliary proteins SecDF. Other proteins may also be involved. The cofactor is Zn(2+).

It is found in the cell membrane. The protein resides in the cytoplasm. It carries out the reaction ATP + H2O + cellular proteinSide 1 = ADP + phosphate + cellular proteinSide 2.. Its function is as follows. Part of the Sec protein translocase complex. Interacts with the SecYEG preprotein conducting channel. Has a central role in coupling the hydrolysis of ATP to the transfer of proteins into and across the cell membrane, serving as an ATP-driven molecular motor driving the stepwise translocation of polypeptide chains across the membrane. The chain is Protein translocase subunit SecA from Dehalococcoides mccartyi (strain ATCC BAA-2100 / JCM 16839 / KCTC 5957 / BAV1).